The following is a 207-amino-acid chain: Small ribosomal subunit protein uS4 (207 aa).

Positions 31 to 53 are disordered; it reads KAKFDSKPGQHGRTSGARTSDFG. Residues 97–160 form the S4 RNA-binding domain; that stretch reads SRLDNVVYRM…KKQNRIVEAL (64 aa).

The protein belongs to the universal ribosomal protein uS4 family. As to quaternary structure, part of the 30S ribosomal subunit. Contacts protein S5. The interaction surface between S4 and S5 is involved in control of translational fidelity.

Its function is as follows. One of the primary rRNA binding proteins, it binds directly to 16S rRNA where it nucleates assembly of the body of the 30S subunit. Functionally, with S5 and S12 plays an important role in translational accuracy. The sequence is that of Small ribosomal subunit protein uS4 from Albidiferax ferrireducens (strain ATCC BAA-621 / DSM 15236 / T118) (Rhodoferax ferrireducens).